A 450-amino-acid polypeptide reads, in one-letter code: tRNA-2-methylthio-N(6)-dimethylallyladenosine synthase (450 aa).

In terms of domain architecture, MTTase N-terminal spans 14–132 (GEFFIETWGC…FPNYLNEVKK (119 aa)). Positions 23, 59, 93, 169, 173, and 176 each coordinate [4Fe-4S] cluster. A Radical SAM core domain is found at 155-385 (RKNSMKAFVT…VEVVNEISAK (231 aa)). The 63-residue stretch at 388–450 (KAYEGKIEEV…NSFSLTGEEI (63 aa)) folds into the TRAM domain.

This sequence belongs to the methylthiotransferase family. MiaB subfamily. As to quaternary structure, monomer. Requires [4Fe-4S] cluster as cofactor.

The protein resides in the cytoplasm. It carries out the reaction N(6)-dimethylallyladenosine(37) in tRNA + (sulfur carrier)-SH + AH2 + 2 S-adenosyl-L-methionine = 2-methylsulfanyl-N(6)-dimethylallyladenosine(37) in tRNA + (sulfur carrier)-H + 5'-deoxyadenosine + L-methionine + A + S-adenosyl-L-homocysteine + 2 H(+). Catalyzes the methylthiolation of N6-(dimethylallyl)adenosine (i(6)A), leading to the formation of 2-methylthio-N6-(dimethylallyl)adenosine (ms(2)i(6)A) at position 37 in tRNAs that read codons beginning with uridine. This chain is tRNA-2-methylthio-N(6)-dimethylallyladenosine synthase, found in Clostridium botulinum (strain Loch Maree / Type A3).